The primary structure comprises 143 residues: ATP synthase subunit b', chloroplastic (143 aa).

Residues 12–31 (LPVMGLQVVLLSWLLEQILY) traverse the membrane as a helical segment.

This sequence belongs to the ATPase B chain family. In terms of assembly, F-type ATPases have 2 components, F(1) - the catalytic core - and F(0) - the membrane proton channel. F(1) has five subunits: alpha(3), beta(3), gamma(1), delta(1), epsilon(1). F(0) has four main subunits: a(1), b(1), b'(1) and c(10-14). The alpha and beta chains form an alternating ring which encloses part of the gamma chain. F(1) is attached to F(0) by a central stalk formed by the gamma and epsilon chains, while a peripheral stalk is formed by the delta, b and b' chains.

It is found in the plastid. The protein resides in the chloroplast thylakoid membrane. F(1)F(0) ATP synthase produces ATP from ADP in the presence of a proton or sodium gradient. F-type ATPases consist of two structural domains, F(1) containing the extramembraneous catalytic core and F(0) containing the membrane proton channel, linked together by a central stalk and a peripheral stalk. During catalysis, ATP synthesis in the catalytic domain of F(1) is coupled via a rotary mechanism of the central stalk subunits to proton translocation. Functionally, component of the F(0) channel, it forms part of the peripheral stalk, linking F(1) to F(0). The b'-subunit is a diverged and duplicated form of b found in plants and photosynthetic bacteria. The chain is ATP synthase subunit b', chloroplastic from Cyanidioschyzon merolae (strain NIES-3377 / 10D) (Unicellular red alga).